The primary structure comprises 473 residues: Ribosomal protein uS12 methylthiotransferase RimO (473 aa).

One can recognise an MTTase N-terminal domain in the interval 30-141; that stretch reads ASVAVLHLGC…IVQIIERVER (112 aa). C39, C75, C104, C179, C183, and C186 together coordinate [4Fe-4S] cluster. The Radical SAM core domain maps to 165–394; it reads TTHAPVAYLR…MQVQQGITFR (230 aa). The region spanning 397 to 463 is the TRAM domain; it reads REQVGRVVPV…PYDLFGQVVA (67 aa).

The protein belongs to the methylthiotransferase family. RimO subfamily. [4Fe-4S] cluster serves as cofactor.

It localises to the cytoplasm. It carries out the reaction L-aspartate(89)-[ribosomal protein uS12]-hydrogen + (sulfur carrier)-SH + AH2 + 2 S-adenosyl-L-methionine = 3-methylsulfanyl-L-aspartate(89)-[ribosomal protein uS12]-hydrogen + (sulfur carrier)-H + 5'-deoxyadenosine + L-methionine + A + S-adenosyl-L-homocysteine + 2 H(+). Its function is as follows. Catalyzes the methylthiolation of an aspartic acid residue of ribosomal protein uS12. This is Ribosomal protein uS12 methylthiotransferase RimO from Synechococcus sp. (strain JA-2-3B'a(2-13)) (Cyanobacteria bacterium Yellowstone B-Prime).